The sequence spans 454 residues: Probable ECA polymerase (454 aa).

A run of 11 helical transmembrane segments spans residues 6–26 (FSGL…LTWF), 37–57 (VFFS…TSIL), 63–83 (VAVV…CFYA), 122–142 (MMAV…FLLF), 157–177 (GVAL…VYFL), 183–203 (AWLF…MIVG), 209–229 (IIIA…ISPG), 230–250 (MLAA…LKRY), 343–363 (LVVM…GLII), 380–400 (YKAA…IVLA), and 411–431 (VIFF…IYWL).

Belongs to the WzyE family. Probably part of a complex composed of WzxE, WzyE and WzzE.

The protein resides in the cell inner membrane. The protein operates within bacterial outer membrane biogenesis; enterobacterial common antigen biosynthesis. In terms of biological role, probably involved in the polymerization of enterobacterial common antigen (ECA) trisaccharide repeat units. This is Probable ECA polymerase from Cronobacter sakazakii (strain ATCC BAA-894) (Enterobacter sakazakii).